A 583-amino-acid polypeptide reads, in one-letter code: Protein NRT1/ PTR FAMILY 5.1 (583 aa).

A helical transmembrane segment spans residues 74 to 94 (WSGAVWITPIAGAYIADSYIG). T98 is subject to Phosphothreonine. A run of 10 helical transmembrane segments spans residues 99-119 (FTAS…AVTV), 134-154 (ASSL…IGAG), 182-202 (FFNW…LGLV), 210-230 (WGLG…VFYI), 320-340 (VLGL…WAQV), 361-381 (IPAA…VPMY), 405-425 (LGVG…VEVK), 446-466 (IFWL…NAIG), 485-505 (TFFT…VTMI), and 529-549 (YYYG…VWAA).

The protein belongs to the major facilitator superfamily. Proton-dependent oligopeptide transporter (POT/PTR) (TC 2.A.17) family. In terms of tissue distribution, expressed in flowers. Detected in stems, leaves and siliques.

It localises to the membrane. The chain is Protein NRT1/ PTR FAMILY 5.1 (NPF5.1) from Arabidopsis thaliana (Mouse-ear cress).